Here is a 54-residue protein sequence, read N- to C-terminus: Ovomucoid (54 aa).

The Kazal-like domain occupies 4 to 54 (VDCSDYPKPVCSLEYMPLCGSDNKTYGNKCNFCNAVADSNGTLTLSHFGKC). Cystine bridges form between Cys-6–Cys-36, Cys-14–Cys-33, and Cys-22–Cys-54. Asn-43 carries N-linked (GlcNAc...) asparagine glycosylation.

The protein resides in the secreted. This chain is Ovomucoid, found in Guira guira (Guira cuckoo).